The primary structure comprises 141 residues: Nucleoside triphosphatase NudI (141 aa).

Residues 1-141 (MRQRTIVCPL…RHTLALKGLL (141 aa)) form the Nudix hydrolase domain. A Nudix box motif is present at residues 38–59 (GGVEPGERIEEALRREVREELG).

Belongs to the Nudix hydrolase family. NudI subfamily. As to quaternary structure, monomer. Mg(2+) is required as a cofactor.

The catalysed reaction is a ribonucleoside 5'-triphosphate + H2O = a ribonucleoside 5'-phosphate + diphosphate + H(+). It carries out the reaction a 2'-deoxyribonucleoside 5'-triphosphate + H2O = a 2'-deoxyribonucleoside 5'-phosphate + diphosphate + H(+). It catalyses the reaction dUTP + H2O = dUMP + diphosphate + H(+). The enzyme catalyses dTTP + H2O = dTMP + diphosphate + H(+). The catalysed reaction is dCTP + H2O = dCMP + diphosphate + H(+). Its function is as follows. Catalyzes the hydrolysis of nucleoside triphosphates, with a preference for pyrimidine deoxynucleoside triphosphates (dUTP, dTTP and dCTP). The protein is Nucleoside triphosphatase NudI of Salmonella agona (strain SL483).